A 227-amino-acid polypeptide reads, in one-letter code: 2,3-bisphosphoglycerate-dependent phosphoglycerate mutase (227 aa).

Residues 7–14, 20–21, arginine 59, 86–89, lysine 97, 113–114, and 182–183 each bind substrate; these read RHGQSEWN, TG, ERHY, RR, and GN. Histidine 8 serves as the catalytic Tele-phosphohistidine intermediate. Glutamate 86 acts as the Proton donor/acceptor in catalysis.

Belongs to the phosphoglycerate mutase family. BPG-dependent PGAM subfamily. As to quaternary structure, homodimer.

The enzyme catalyses (2R)-2-phosphoglycerate = (2R)-3-phosphoglycerate. Its pathway is carbohydrate degradation; glycolysis; pyruvate from D-glyceraldehyde 3-phosphate: step 3/5. In terms of biological role, catalyzes the interconversion of 2-phosphoglycerate and 3-phosphoglycerate. In Neisseria meningitidis serogroup B (strain ATCC BAA-335 / MC58), this protein is 2,3-bisphosphoglycerate-dependent phosphoglycerate mutase.